A 321-amino-acid chain; its full sequence is Biotin synthase (321 aa).

A Radical SAM core domain is found at 45–271 (FFGKKVKLNM…INPSKEIRIA (227 aa)). 3 residues coordinate [4Fe-4S] cluster: cysteine 63, cysteine 67, and cysteine 70. Positions 106, 139, 199, and 269 each coordinate [2Fe-2S] cluster.

The protein belongs to the radical SAM superfamily. Biotin synthase family. Homodimer. It depends on [4Fe-4S] cluster as a cofactor. Requires [2Fe-2S] cluster as cofactor.

The catalysed reaction is (4R,5S)-dethiobiotin + (sulfur carrier)-SH + 2 reduced [2Fe-2S]-[ferredoxin] + 2 S-adenosyl-L-methionine = (sulfur carrier)-H + biotin + 2 5'-deoxyadenosine + 2 L-methionine + 2 oxidized [2Fe-2S]-[ferredoxin]. It participates in cofactor biosynthesis; biotin biosynthesis; biotin from 7,8-diaminononanoate: step 2/2. Catalyzes the conversion of dethiobiotin (DTB) to biotin by the insertion of a sulfur atom into dethiobiotin via a radical-based mechanism. The sequence is that of Biotin synthase from Staphylococcus haemolyticus (strain JCSC1435).